A 290-amino-acid chain; its full sequence is Probable 2-(5''-triphosphoribosyl)-3'-dephosphocoenzyme-A synthase (290 aa).

Belongs to the CitG/MdcB family.

The enzyme catalyses 3'-dephospho-CoA + ATP = 2'-(5''-triphospho-alpha-D-ribosyl)-3'-dephospho-CoA + adenine. Functionally, involved in the formation of 2-(5''-phosphoribosyl)-3'-dephosphocoenzyme-A, the prosthetic group of the acyl-carrier protein of the malonate decarboxylase. The polypeptide is Probable 2-(5''-triphosphoribosyl)-3'-dephosphocoenzyme-A synthase (Stutzerimonas stutzeri (strain A1501) (Pseudomonas stutzeri)).